The primary structure comprises 466 residues: MKSYDVVIIGGGPGGYNAAIRAGQLGLTVACVEGRSTLGGTCLNVGCMPSKALLHASELYEAASGDEFAHLGIEVKPTLNLAQMMKQKDESVTGLTKGIEYLFRKNKVDWIKGWGRLDGVGKVVVKAEDGSETALQAKDIVIATGSEPTPLPGVTIDNQRIIDSTGALSLPQVPKHLVVIGAGVIGLELGSVWRRLGSQVTVIEYLDRICPGTDTETAKTLQKALAKQGMVFKLGSKVTQATASADGVSLVLEPAAGGTAESLQADYVLVAIGRRPYTKGLNLESVGLETDKRGMLAQRTPPTSVPGVWVIGDVTSGPMLAHKAEDEAVACIERIAGKPHEVNYNLIPGVIYTRPELATVGKTEEQLKAEGRAYKVGKFPFTANSRAKINHETEGFAKVIADAETDEVLGVHLVGPSVSEMIGEFCVAMEFSASAEDIALTCHPHPTRSEALRQAAMNVDGMAMQI.

FAD is bound by residues 33–42, Lys-51, and Gly-115; that span reads EGRSTLGGTC. A disulfide bridge connects residues Cys-42 and Cys-47. Residues 181–185, Glu-204, Val-238, and 271–274 each bind NAD(+); these read GAGVI and AIGR. 2 residues coordinate FAD: Asp-313 and Ala-321. The active-site Proton acceptor is the His-445.

This sequence belongs to the class-I pyridine nucleotide-disulfide oxidoreductase family. As to quaternary structure, homodimer. FAD serves as cofactor.

It localises to the cytoplasm. The enzyme catalyses N(6)-[(R)-dihydrolipoyl]-L-lysyl-[protein] + NAD(+) = N(6)-[(R)-lipoyl]-L-lysyl-[protein] + NADH + H(+). In terms of biological role, LPD-3 may substitute for lipoamide dehydrogenase of the 2-oxoglutarate dehydrogenase and pyruvate multienzyme complexes when the latter is inactive or missing. The protein is Dihydrolipoyl dehydrogenase 3 (lpd3) of Pseudomonas putida (Arthrobacter siderocapsulatus).